The primary structure comprises 387 residues: Major outer membrane protein P.IA (387 aa).

A signal peptide spans 1–19 (MRKKLTALVLSALPLAAVA).

This sequence belongs to the Gram-negative porin family. As to quaternary structure, homotrimer.

It is found in the cell outer membrane. In terms of biological role, serves as a slightly cation selective porin. Major antigen on the gonococcal cell surface and it may have pathogenic properties in addition to its porin activity. The polypeptide is Major outer membrane protein P.IA (porA) (Neisseria meningitidis serogroup C).